The sequence spans 365 residues: tRNA N6-adenosine threonylcarbamoyltransferase (365 aa).

2 residues coordinate Fe cation: histidine 119 and histidine 123. Substrate contacts are provided by residues 141-145 (LVSGG), aspartate 174, glycine 187, and asparagine 288. Aspartate 316 serves as a coordination point for Fe cation.

Belongs to the KAE1 / TsaD family. Fe(2+) serves as cofactor.

The protein resides in the cytoplasm. The enzyme catalyses L-threonylcarbamoyladenylate + adenosine(37) in tRNA = N(6)-L-threonylcarbamoyladenosine(37) in tRNA + AMP + H(+). Functionally, required for the formation of a threonylcarbamoyl group on adenosine at position 37 (t(6)A37) in tRNAs that read codons beginning with adenine. Is involved in the transfer of the threonylcarbamoyl moiety of threonylcarbamoyl-AMP (TC-AMP) to the N6 group of A37, together with TsaE and TsaB. TsaD likely plays a direct catalytic role in this reaction. The polypeptide is tRNA N6-adenosine threonylcarbamoyltransferase (Rhizobium leguminosarum bv. trifolii (strain WSM2304)).